The sequence spans 377 residues: Cyclin-I (377 aa).

Residues 356–377 are disordered; sequence TDLSRQEGHASPCPPLQPVSVM. Residues 367–377 show a composition bias toward pro residues; it reads PCPPLQPVSVM.

It belongs to the cyclin family.

This chain is Cyclin-I (Ccni), found in Mus musculus (Mouse).